The following is a 757-amino-acid chain: Probable tRNA (uracil-O(2)-)-methyltransferase (757 aa).

Disordered stretches follow at residues 55-93 and 108-138; these read EARG…GPEQ and QQEE…GDFP. Gly residues predominate over residues 72 to 84; that stretch reads PGPGQGSPGGGPG. Ser-78 is modified (phosphoserine). Residues 123-136 show a composition bias toward basic and acidic residues; that stretch reads DSGHPGHAEGREGD. The residue at position 533 (Ser-533) is a Phosphoserine. The segment at 713–743 adopts a C3H1-type zinc-finger fold; sequence ACKTRLCWFFMHHPDGCALSTDCCPFAHGPA.

It belongs to the TRM44 family.

The protein localises to the cytoplasm. The enzyme catalyses uridine(44) in tRNA(Ser) + S-adenosyl-L-methionine = 2'-O-methyluridine(44) in tRNA(Ser) + S-adenosyl-L-homocysteine + H(+). Functionally, probable adenosyl-L-methionine (AdoMet)-dependent tRNA (uracil-O(2)-)-methyltransferase. This Homo sapiens (Human) protein is Probable tRNA (uracil-O(2)-)-methyltransferase (TRMT44).